The chain runs to 437 residues: Amino-acid acetyltransferase (437 aa).

The N-acetyltransferase domain maps to 289 to 429 (ENIRLATSFD…EHYNYQRMSK (141 aa)).

This sequence belongs to the acetyltransferase family. ArgA subfamily.

Its subcellular location is the cytoplasm. The enzyme catalyses L-glutamate + acetyl-CoA = N-acetyl-L-glutamate + CoA + H(+). It participates in amino-acid biosynthesis; L-arginine biosynthesis; N(2)-acetyl-L-ornithine from L-glutamate: step 1/4. In Actinobacillus pleuropneumoniae serotype 3 (strain JL03), this protein is Amino-acid acetyltransferase.